Consider the following 155-residue polypeptide: Small ribosomal subunit protein uS7cz/uS7cy (155 aa).

This sequence belongs to the universal ribosomal protein uS7 family. Part of the 30S ribosomal subunit.

Its subcellular location is the plastid. It is found in the chloroplast. Functionally, one of the primary rRNA binding proteins, it binds directly to 16S rRNA where it nucleates assembly of the head domain of the 30S subunit. The protein is Small ribosomal subunit protein uS7cz/uS7cy (rps7-A) of Nymphaea alba (White water-lily).